The chain runs to 207 residues: Probable GTP-binding protein EngB (207 aa).

An EngB-type G domain is found at 24 to 199 (GGYEVAFAGR…RAIVGAWLGL (176 aa)). Residues 32–39 (GRSNAGKS), 59–63 (GRTQQ), 77–80 (DLPG), 144–147 (TKAD), and 178–180 (YSG) each bind GTP. Mg(2+) is bound by residues Ser39 and Thr61.

Belongs to the TRAFAC class TrmE-Era-EngA-EngB-Septin-like GTPase superfamily. EngB GTPase family. It depends on Mg(2+) as a cofactor.

Necessary for normal cell division and for the maintenance of normal septation. The protein is Probable GTP-binding protein EngB of Xanthomonas euvesicatoria pv. vesicatoria (strain 85-10) (Xanthomonas campestris pv. vesicatoria).